The primary structure comprises 254 residues: 4-hydroxy-tetrahydrodipicolinate reductase (254 aa).

Gly-7 to Ile-12 is an NAD(+) binding site. Arg-35 contributes to the NADP(+) binding site. Residues Gly-91 to Thr-93 and Ala-115 to Met-118 each bind NAD(+). His-147 (proton donor/acceptor) is an active-site residue. His-148 lines the (S)-2,3,4,5-tetrahydrodipicolinate pocket. The active-site Proton donor is the Lys-151. Gly-157–Thr-158 is a (S)-2,3,4,5-tetrahydrodipicolinate binding site.

It belongs to the DapB family.

Its subcellular location is the cytoplasm. The catalysed reaction is (S)-2,3,4,5-tetrahydrodipicolinate + NAD(+) + H2O = (2S,4S)-4-hydroxy-2,3,4,5-tetrahydrodipicolinate + NADH + H(+). It carries out the reaction (S)-2,3,4,5-tetrahydrodipicolinate + NADP(+) + H2O = (2S,4S)-4-hydroxy-2,3,4,5-tetrahydrodipicolinate + NADPH + H(+). The protein operates within amino-acid biosynthesis; L-lysine biosynthesis via DAP pathway; (S)-tetrahydrodipicolinate from L-aspartate: step 4/4. Catalyzes the conversion of 4-hydroxy-tetrahydrodipicolinate (HTPA) to tetrahydrodipicolinate. This is 4-hydroxy-tetrahydrodipicolinate reductase from Helicobacter pylori (strain Shi470).